The following is a 290-amino-acid chain: Cbb3-type cytochrome c oxidase subunit CcoP (290 aa).

A disordered region spans residues 1–22 (MSVKPTKQKPGEPPTTGHSWDG). Residues 1-37 (MSVKPTKQKPGEPPTTGHSWDGIEEFDNPMPRWWLWT) lie on the Cytoplasmic side of the membrane. Residues 38–58 (FYVTIVWAIGYSILYPAWPLI) form a helical membrane-spanning segment. Over 59 to 290 (NGATNGLIGH…VYVHGLGGGE (232 aa)) the chain is Periplasmic. Cytochrome c domains lie at 109–199 (YATN…LQIS) and 206–287 (ALSA…HGLG). Heme c contacts are provided by C122, C125, H126, M174, C219, C222, H223, and M264.

Belongs to the CcoP / FixP family. As to quaternary structure, component of the cbb3-type cytochrome c oxidase at least composed of CcoN, CcoO, CcoQ and CcoP. The cofactor is heme c.

It localises to the cell inner membrane. The protein operates within energy metabolism; oxidative phosphorylation. In terms of biological role, C-type cytochrome. Part of the cbb3-type cytochrome c oxidase complex. CcoP subunit is required for transferring electrons from donor cytochrome c via its heme groups to CcoO subunit. From there, electrons are shuttled to the catalytic binuclear center of CcoN subunit where oxygen reduction takes place. The complex also functions as a proton pump. The chain is Cbb3-type cytochrome c oxidase subunit CcoP from Cereibacter sphaeroides (strain ATCC 17023 / DSM 158 / JCM 6121 / CCUG 31486 / LMG 2827 / NBRC 12203 / NCIMB 8253 / ATH 2.4.1.) (Rhodobacter sphaeroides).